The following is a 185-amino-acid chain: Ribosome-recycling factor (185 aa).

Belongs to the RRF family.

It localises to the cytoplasm. Responsible for the release of ribosomes from messenger RNA at the termination of protein biosynthesis. May increase the efficiency of translation by recycling ribosomes from one round of translation to another. The polypeptide is Ribosome-recycling factor (Geotalea daltonii (strain DSM 22248 / JCM 15807 / FRC-32) (Geobacter daltonii)).